A 361-amino-acid polypeptide reads, in one-letter code: Free fatty acid receptor 4 (361 aa).

The Extracellular portion of the chain corresponds to 1–45; that stretch reads MSPECARAAGDAPLRSLEQANRTRFSFFSDVKGDHRLLLAAVETT. The N-linked (GlcNAc...) asparagine glycan is linked to asparagine 21. The helical transmembrane segment at 46 to 66 threads the bilayer; it reads VLALIFAVSLLGNVCALVLVA. The Cytoplasmic portion of the chain corresponds to 67–77; the sequence is RRRRRGTTACL. A helical transmembrane segment spans residues 78–98; sequence VLNLFCADLLFISAIPLVLAV. The Extracellular portion of the chain corresponds to 99 to 112; the sequence is RWTEAWLLGPVACH. Cysteine 111 and cysteine 194 are joined by a disulfide. The helical transmembrane segment at 113 to 133 threads the bilayer; that stretch reads LLFYLMTLSGSVTILTLAAVS. Residues 134–156 lie on the Cytoplasmic side of the membrane; it reads LERMVCIVHLQRGVRGPGRRARA. A helical membrane pass occupies residues 157-177; that stretch reads VLLTLIWGYSAVAALPLCVFF. At 178–204 the chain is on the extracellular side; that stretch reads RVVPQRLPGADQEISICTLIWPTIAGE. Residues 205-225 traverse the membrane as a helical segment; it reads ISWDVSFVTLNFLVPGLVIVI. Residues 226-268 lie on the Cytoplasmic side of the membrane; that stretch reads SYSKILQITKASRKRLTVSLAYSESHQIRVSQQDFRLFRTLFL. The chain crosses the membrane as a helical span at residues 269 to 289; it reads LMVSFFIMWSPIIITILLILI. Residues 290 to 295 lie on the Extracellular side of the membrane; it reads QNFKQD. The helical transmembrane segment at 296-316 threads the bilayer; the sequence is LVIWPSLFFWVVAFTFANSAL. The Cytoplasmic segment spans residues 317–361; sequence NPILYNMTLCRNEWKKIFCCFWFPEKGAILTDTSVKRNDLSVISG. A phosphothreonine mark is found at threonine 347 and threonine 349. Residues serine 350, serine 357, and serine 360 each carry the phosphoserine modification.

This sequence belongs to the G-protein coupled receptor 1 family. As to quaternary structure, interacts (via C-terminus) with ARRB2 following LCFAs stimulation. Phosphorylated at two clusters of Ser and Thr residues located in the intracellular C-terminus. Prerequisite for FFAR4 internalization via an ARRB2-dependent pathway. In terms of tissue distribution, highly expressed in lung and colon.

It localises to the cell membrane. The protein resides in the endosome membrane. It is found in the lysosome membrane. Its subcellular location is the cell projection. The protein localises to the cilium membrane. Its function is as follows. G-protein-coupled receptor for long-chain fatty acids (LCFAs) with a major role in adipogenesis, energy metabolism and inflammation. Signals via G-protein and beta-arrestin pathways. LCFAs sensing initiates activation of phosphoinositidase C-linked G proteins GNAQ and GNA11 (G(q)/G(11)), inducing a variety of cellular responses via second messenger pathways such as intracellular calcium mobilization, modulation of cyclic adenosine monophosphate (cAMP) production, and mitogen-activated protein kinases (MAPKs). After LCFAs binding, associates with beta-arrestin ARRB2 that acts as an adapter protein coupling the receptor to specific downstream signaling pathways, as well as mediating receptor endocytosis. In response to dietary fats, plays an important role in the regulation of adipocyte proliferation and differentiation. Acts as a receptor for omega-3 polyunsaturated fatty acids (PUFAs) at primary cilium of perivascular preadipocytes, initiating an adipogenic program via cAMP and CTCF-dependent chromatin remodeling that ultimately results in transcriptional activation of adipogenic genes and cell cycle entry. Induces differentiation of brown and beige adipocytes probably via autocrine and endocrine functions of FGF21 hormone. Contributes to the thermogenic activation of brown adipose tissue and the browning of white adipose tissue. Activates brown adipocytes by initiating intracellular calcium signaling leading to mitochondrial depolarization and fission, and overall increased mitochondrial respiration. Consequently stimulates fatty acid uptake and oxidation in mitochondria together with UCP1-mediated thermogenic respiration, eventually reducing fat mass. Regulates bi-potential differentiation of bone marrow mesenchymal stem cells toward osteoblasts or adipocytes likely by up-regulating distinct integrins. In response to dietary fats regulates hormone secretion and appetite. Stimulates GIP and GLP1 secretion from enteroendocrine cells as well as GCG secretion in pancreatic alpha cells, thereby playing a role in the regulation of blood glucose levels. Negatively regulates glucose-induced SST secretion in pancreatic delta cells. Mediates LCFAs inhibition of GHRL secretion, an appetite-controlling hormone. In taste buds, contributes to sensing of dietary fatty acids by the gustatory system. During the inflammatory response, promotes anti-inflammatory M2 macrophage differentiation in adipose tissue. Mediates the anti-inflammatory effects of omega-3 PUFAs via inhibition of NLRP3 inflammasome activation. In this pathway, interacts with adapter protein ARRB2 and inhibits the priming step triggered by Toll-like receptors (TLRs) at the level of TAK1 and TAB1. Further inhibits the activation step when ARRB2 directly associates with NLRP3, leading to inhibition of pro-inflammatory cytokine release. Mediates LCFAs anti-apoptotic effects. The polypeptide is Free fatty acid receptor 4 (FFAR4) (Macaca fascicularis (Crab-eating macaque)).